A 454-amino-acid chain; its full sequence is Bifunctional protein GlmU (454 aa).

Residues 1–225 are pyrophosphorylase; sequence MNIVILAAGM…LWETLGVNSK (225 aa). UDP-N-acetyl-alpha-D-glucosamine is bound by residues 6–9, Lys20, Gln71, 76–77, 98–100, Gly135, Glu150, Asn165, and Asn223; these read LAAG, GT, and YGD. Residue Asp100 participates in Mg(2+) binding. Asn223 lines the Mg(2+) pocket. The linker stretch occupies residues 226–246; sequence VQLAEVERIHQRNLAQRLLET. Positions 247 to 454 are N-acetyltransferase; sequence GVTLADPARI…WQRPVKKAKQ (208 aa). The UDP-N-acetyl-alpha-D-glucosamine site is built by Arg329 and Lys347. His359 functions as the Proton acceptor in the catalytic mechanism. 2 residues coordinate UDP-N-acetyl-alpha-D-glucosamine: Tyr362 and Asn373. Residues Ala376, 382–383, Ser401, Ala419, and Arg436 contribute to the acetyl-CoA site; that span reads NY.

It in the N-terminal section; belongs to the N-acetylglucosamine-1-phosphate uridyltransferase family. This sequence in the C-terminal section; belongs to the transferase hexapeptide repeat family. Homotrimer. Mg(2+) is required as a cofactor.

It localises to the cytoplasm. It catalyses the reaction alpha-D-glucosamine 1-phosphate + acetyl-CoA = N-acetyl-alpha-D-glucosamine 1-phosphate + CoA + H(+). It carries out the reaction N-acetyl-alpha-D-glucosamine 1-phosphate + UTP + H(+) = UDP-N-acetyl-alpha-D-glucosamine + diphosphate. The protein operates within nucleotide-sugar biosynthesis; UDP-N-acetyl-alpha-D-glucosamine biosynthesis; N-acetyl-alpha-D-glucosamine 1-phosphate from alpha-D-glucosamine 6-phosphate (route II): step 2/2. It participates in nucleotide-sugar biosynthesis; UDP-N-acetyl-alpha-D-glucosamine biosynthesis; UDP-N-acetyl-alpha-D-glucosamine from N-acetyl-alpha-D-glucosamine 1-phosphate: step 1/1. It functions in the pathway bacterial outer membrane biogenesis; LPS lipid A biosynthesis. In terms of biological role, catalyzes the last two sequential reactions in the de novo biosynthetic pathway for UDP-N-acetylglucosamine (UDP-GlcNAc). The C-terminal domain catalyzes the transfer of acetyl group from acetyl coenzyme A to glucosamine-1-phosphate (GlcN-1-P) to produce N-acetylglucosamine-1-phosphate (GlcNAc-1-P), which is converted into UDP-GlcNAc by the transfer of uridine 5-monophosphate (from uridine 5-triphosphate), a reaction catalyzed by the N-terminal domain. This Cupriavidus pinatubonensis (strain JMP 134 / LMG 1197) (Cupriavidus necator (strain JMP 134)) protein is Bifunctional protein GlmU.